A 707-amino-acid polypeptide reads, in one-letter code: Elongation factor G (707 aa).

Residues 8–294 (ERYRNFGIIA…GVVDYLPSPL (287 aa)) form the tr-type G domain. Residues 17-24 (AHIDAGKT), 92-96 (DTPGH), and 146-149 (NKMD) contribute to the GTP site.

It belongs to the TRAFAC class translation factor GTPase superfamily. Classic translation factor GTPase family. EF-G/EF-2 subfamily.

It is found in the cytoplasm. In terms of biological role, catalyzes the GTP-dependent ribosomal translocation step during translation elongation. During this step, the ribosome changes from the pre-translocational (PRE) to the post-translocational (POST) state as the newly formed A-site-bound peptidyl-tRNA and P-site-bound deacylated tRNA move to the P and E sites, respectively. Catalyzes the coordinated movement of the two tRNA molecules, the mRNA and conformational changes in the ribosome. In Hyphomonas neptunium (strain ATCC 15444), this protein is Elongation factor G.